The following is a 400-amino-acid chain: Tryptophan synthase beta chain (400 aa).

Lys-92 carries the N6-(pyridoxal phosphate)lysine modification.

The protein belongs to the TrpB family. As to quaternary structure, tetramer of two alpha and two beta chains. It depends on pyridoxal 5'-phosphate as a cofactor.

It carries out the reaction (1S,2R)-1-C-(indol-3-yl)glycerol 3-phosphate + L-serine = D-glyceraldehyde 3-phosphate + L-tryptophan + H2O. The protein operates within amino-acid biosynthesis; L-tryptophan biosynthesis; L-tryptophan from chorismate: step 5/5. Its function is as follows. The beta subunit is responsible for the synthesis of L-tryptophan from indole and L-serine. In Neisseria gonorrhoeae, this protein is Tryptophan synthase beta chain.